The primary structure comprises 160 residues: MGGGDYWPIIIRHCCFYLVFSIAFVGYIVFAYYKNLHLNTTMKLIALLCILIWLSQPGLNRPLSIFYMKQNLPRTYTPPIRELEYWCTYGKHCDFCWECRNGICKNKVWDDMPLIKQNDYISQCSIARYFDRCMYFIKPKTPYIHYMDCSQPTAYKGFSH.

2 consecutive transmembrane segments (helical) span residues 13–33 and 35–55; these read HCCF…FAYY and NLHL…IWLS.

Belongs to the asfivirus MGF 110 family.

It localises to the host membrane. Functionally, plays a role in virus cell tropism, and may be required for efficient virus replication in macrophages. This Ornithodoros (relapsing fever ticks) protein is Protein MGF 110-13L.